Reading from the N-terminus, the 500-residue chain is Vitamin D(3) 25-hydroxylase (500 aa).

Position 446 (cysteine 446) interacts with heme.

This sequence belongs to the cytochrome P450 family. Heme serves as cofactor. In terms of tissue distribution, found in liver and kidney.

Its subcellular location is the endoplasmic reticulum membrane. The protein localises to the microsome membrane. It carries out the reaction calciol + reduced [NADPH--hemoprotein reductase] + O2 = calcidiol + oxidized [NADPH--hemoprotein reductase] + H2O + H(+). It catalyses the reaction alfacalcidol + reduced [NADPH--hemoprotein reductase] + O2 = calcitriol + oxidized [NADPH--hemoprotein reductase] + H2O + H(+). The enzyme catalyses dodecanoate + reduced [NADPH--hemoprotein reductase] + O2 = 12-hydroxydodecanoate + oxidized [NADPH--hemoprotein reductase] + H2O + H(+). The catalysed reaction is dodecanoate + reduced [NADPH--hemoprotein reductase] + O2 = 11-hydroxydodecanoate + oxidized [NADPH--hemoprotein reductase] + H2O + H(+). It carries out the reaction 5beta-cholestane-3alpha,7alpha-diol + reduced [NADPH--hemoprotein reductase] + O2 = 5beta-cholestane-3alpha,7alpha,25-triol + oxidized [NADPH--hemoprotein reductase] + H2O + H(+). It catalyses the reaction 5beta-cholestane-3alpha,7alpha,12alpha-triol + reduced [NADPH--hemoprotein reductase] + O2 = 5beta-cholestane-3alpha,7alpha,12alpha,25-tetrol + oxidized [NADPH--hemoprotein reductase] + H2O + H(+). Catalyzes the 25-hydroxylation of vitamin D(3) (calciol), 1alpha-hydroxyvitamin D(3) (alphacalcidiol) and some C27 steroids. In addition the enzyme catalyzes the hydroxylation of positions 11 and 12 of dodecanoate. In Sus scrofa (Pig), this protein is Vitamin D(3) 25-hydroxylase (CYP2D25).